A 530-amino-acid polypeptide reads, in one-letter code: uncharacterized protein (530 aa).

2 stretches are compositionally biased toward polar residues: residues 60 to 74 (LNES…SSTP) and 92 to 103 (GQGTSRPLPTLS). Disordered regions lie at residues 60-103 (LNES…PTLS) and 121-155 (ASST…GLGN). Residues 131–142 (PDPRDAPREGSF) show a composition bias toward basic and acidic residues.

This is an uncharacterized protein from Mus musculus (Mouse).